We begin with the raw amino-acid sequence, 78 residues long: Defensin-like protein 171 (78 aa).

The signal sequence occupies residues 1-23 (MAKTASSLVLPIIFLVMFALVEQ). 4 disulfides stabilise this stretch: Cys27–Cys71, Cys34–Cys56, Cys40–Cys65, and Cys44–Cys67.

This sequence belongs to the DEFL family.

It is found in the secreted. In Arabidopsis thaliana (Mouse-ear cress), this protein is Defensin-like protein 171 (LCR61).